Consider the following 416-residue polypeptide: Serine hydroxymethyltransferase (416 aa).

Residues leucine 121 and 125–127 (GHL) each bind (6S)-5,6,7,8-tetrahydrofolate. Residue lysine 230 is modified to N6-(pyridoxal phosphate)lysine. 355–357 (SPF) contributes to the (6S)-5,6,7,8-tetrahydrofolate binding site.

It belongs to the SHMT family. In terms of assembly, homodimer. Pyridoxal 5'-phosphate is required as a cofactor.

Its subcellular location is the cytoplasm. The catalysed reaction is (6R)-5,10-methylene-5,6,7,8-tetrahydrofolate + glycine + H2O = (6S)-5,6,7,8-tetrahydrofolate + L-serine. It functions in the pathway one-carbon metabolism; tetrahydrofolate interconversion. It participates in amino-acid biosynthesis; glycine biosynthesis; glycine from L-serine: step 1/1. Catalyzes the reversible interconversion of serine and glycine with tetrahydrofolate (THF) serving as the one-carbon carrier. This reaction serves as the major source of one-carbon groups required for the biosynthesis of purines, thymidylate, methionine, and other important biomolecules. Also exhibits THF-independent aldolase activity toward beta-hydroxyamino acids, producing glycine and aldehydes, via a retro-aldol mechanism. The polypeptide is Serine hydroxymethyltransferase (Streptococcus thermophilus (strain CNRZ 1066)).